A 200-amino-acid polypeptide reads, in one-letter code: Inducible T-cell costimulator (200 aa).

The signal sequence occupies residues 1–20; it reads MKPYFSCVFVFCFLIKLLTG. At 21 to 145 the chain is on the extracellular side; sequence ELNDLANHRM…LCCQLKLWLP (125 aa). Residues 30–133 form the Ig-like V-type domain; that stretch reads MFSFHDGGVQ…LSGGYLLIYE (104 aa). Disulfide bonds link C42/C109 and C63/C83. Residues N89 and N123 are each glycosylated (N-linked (GlcNAc...) asparagine). Residues 146 to 166 form a helical membrane-spanning segment; the sequence is VGCAAFVAALLFGCIFIVWFA. Residues 167 to 200 lie on the Cytoplasmic side of the membrane; sequence KKKYRSSVHDPNSEYMFMAAVNTNKKSRLAGMTS.

In terms of assembly, homodimer; disulfide-linked. Interacts with ICOSLG. Interacts with PIK3R1. Interacts with TBK1; this interaction is critical for the maturation of T follicular regulatory cells. Post-translationally, N-glycosylated. Strongly expressed in the spleen and lung. Lower expression seen in liver, kidney and testis.

The protein localises to the cell membrane. In terms of biological role, stimulatory receptor expressed in activated or antigen-experienced T-cells that plays an important role in the immune response. Upon binding to its ligand ICOSL expressed on antigen presenting cells (APCs), delivers costimulatory signals that enhances all basic T-cell responses to a foreign antigen, namely proliferation, secretion of lymphokines including IL10, up-regulation of molecules that mediate cell-cell interaction, and effective help for antibody secretion by B-cells. Also acts as a costimulatory receptor critical for the differentiation of T follicular regulatory cells upon immune challenges such as viral infection. Mechanistically, potentiates TCR-induced calcium flux by augmenting PLCG1 activation and actin remodeling. In addition, activates PI3K signaling pathways independently of calcium flux. Essential both for efficient interaction between T and B-cells and for normal antibody responses to T-cell dependent antigens. Prevents the apoptosis of pre-activated T-cells. Plays a critical role in CD40-mediated class switching of immunoglobin isotypes. This chain is Inducible T-cell costimulator (Icos), found in Rattus norvegicus (Rat).